Consider the following 275-residue polypeptide: Large ribosomal subunit protein uL2 (275 aa).

Residues 219 to 263 (EVRGAAMNPRDHPHGGGEGRAPRGMPTPKTKWGKPARGVKTRHNP) are disordered. Positions 227–239 (PRDHPHGGGEGRA) are enriched in basic and acidic residues. The span at 249–262 (KWGKPARGVKTRHN) shows a compositional bias: basic residues.

This sequence belongs to the universal ribosomal protein uL2 family. As to quaternary structure, part of the 50S ribosomal subunit. Forms a bridge to the 30S subunit in the 70S ribosome.

In terms of biological role, one of the primary rRNA binding proteins. Required for association of the 30S and 50S subunits to form the 70S ribosome, for tRNA binding and peptide bond formation. It has been suggested to have peptidyltransferase activity; this is somewhat controversial. Makes several contacts with the 16S rRNA in the 70S ribosome. The chain is Large ribosomal subunit protein uL2 from Roseiflexus castenholzii (strain DSM 13941 / HLO8).